The sequence spans 274 residues: Factor H binding protein (274 aa).

Positions 1 to 19 (MNRTAFCCLSLTTALILTA) are cleaved as a signal peptide. Residue C20 is the site of N-palmitoyl cysteine attachment. Residue C20 is the site of S-diacylglycerol cysteine attachment. The tract at residues 27–119 (VAADIGAGLA…LESGEFQVYK (93 aa)) is domain A. Residues 120–183 (QSHSALTAFQ…TAFGSDDAGG (64 aa)) form a domain B region. Positions 184-274 (KLTYTIDFAA…IRHIGLAAKQ (91 aa)) are domain C.

It belongs to the factor H binding-protein family. Binds to host factor H (fH from human). Both fHbp beta-barrels contact Sushi domains 6 and 7 in fH (also called complement control protein domains, CCP). This interaction probably mimics the normal (carbohydrate-dependent) mode of fH recruitement, regulating fH activity. Sucrose octasulphate inhibits the fHbp-fH interaction. Protein is lipidated in N.meningitidis upon growth in radioactive palmitic acid, probably on Cys-20.

The protein resides in the cell outer membrane. It localises to the secreted. The protein localises to the extracellular vesicle. It is found in the bacterial extracellular vesicle. Its function is as follows. A bacterial surface lipoprotein that binds host (human) complement factor H (fH, gene CFH), binding contributes to the avoidance of complement-mediated lysis by N.meningitidis. Binding of fH to the bacteria surface is independent of bacterial sialic acid moieties. fH binding affinity is high enough that it may sequester plasma fH, depleting its circulating levels and de-regulating complement in the host. This protein induces high levels of bactericidal antibodies in mice. This chain is Factor H binding protein (fhbP), found in Neisseria meningitidis serogroup B (strain ATCC BAA-335 / MC58).